The chain runs to 350 residues: Protein FAM118B (350 aa).

Ala-2 is subject to N-acetylalanine. Ser-9 bears the Phosphoserine mark. The tract at residues 330-350 (AREGQLNGSSAAHGEIRGCST) is disordered.

The protein belongs to the FAM118 family.

Its subcellular location is the nucleus. The protein resides in the cajal body. In terms of biological role, may play a role in Cajal bodies formation. The protein is Protein FAM118B (Fam118b) of Rattus norvegicus (Rat).